A 361-amino-acid chain; its full sequence is tRNA/tmRNA (uracil-C(5))-methyltransferase (361 aa).

S-adenosyl-L-methionine contacts are provided by Gln185, Tyr213, Asn218, Glu234, and Asp294. Residue Cys319 is the Nucleophile of the active site. Glu353 serves as the catalytic Proton acceptor.

It belongs to the class I-like SAM-binding methyltransferase superfamily. RNA M5U methyltransferase family. TrmA subfamily.

It catalyses the reaction uridine(54) in tRNA + S-adenosyl-L-methionine = 5-methyluridine(54) in tRNA + S-adenosyl-L-homocysteine + H(+). The catalysed reaction is uridine(341) in tmRNA + S-adenosyl-L-methionine = 5-methyluridine(341) in tmRNA + S-adenosyl-L-homocysteine + H(+). Functionally, dual-specificity methyltransferase that catalyzes the formation of 5-methyluridine at position 54 (m5U54) in all tRNAs, and that of position 341 (m5U341) in tmRNA (transfer-mRNA). The protein is tRNA/tmRNA (uracil-C(5))-methyltransferase of Pseudomonas syringae pv. syringae (strain B728a).